The sequence spans 334 residues: L-lactate dehydrogenase A chain (334 aa).

Residues 30–58 (GQVG…LEDK) and Arg-100 contribute to the NAD(+) site. Positions 107, 139, and 170 each coordinate substrate. Position 139 (Asn-139) interacts with NAD(+). His-194 acts as the Proton acceptor in catalysis. Thr-249 is a substrate binding site.

Belongs to the LDH/MDH superfamily. LDH family. Homotetramer.

It is found in the cytoplasm. It catalyses the reaction (S)-lactate + NAD(+) = pyruvate + NADH + H(+). It participates in fermentation; pyruvate fermentation to lactate; (S)-lactate from pyruvate: step 1/1. Functionally, interconverts simultaneously and stereospecifically pyruvate and lactate with concomitant interconversion of NADH and NAD(+). The polypeptide is L-lactate dehydrogenase A chain (ldha) (Xenopus laevis (African clawed frog)).